The sequence spans 306 residues: D-alanine--D-alanine ligase (306 aa).

The ATP-grasp domain maps to 101-300 (KVVMAAAGIP…FGELVTWMVE (200 aa)). An ATP-binding site is contributed by 128 to 182 (LPPPYVLKPNTGGSSVGVFIVKEDQPHPPQELFRADWTFGESLMAEPFIKGLELT). Mg(2+) contacts are provided by Asp-250, Glu-267, and Asn-269.

This sequence belongs to the D-alanine--D-alanine ligase family. It depends on Mg(2+) as a cofactor. The cofactor is Mn(2+).

It is found in the cytoplasm. The enzyme catalyses 2 D-alanine + ATP = D-alanyl-D-alanine + ADP + phosphate + H(+). The protein operates within cell wall biogenesis; peptidoglycan biosynthesis. Its function is as follows. Cell wall formation. This Azorhizobium caulinodans (strain ATCC 43989 / DSM 5975 / JCM 20966 / LMG 6465 / NBRC 14845 / NCIMB 13405 / ORS 571) protein is D-alanine--D-alanine ligase.